Here is a 61-residue protein sequence, read N- to C-terminus: U-scoloptoxin(14)-Sm1a (61 aa).

An N-terminal signal peptide occupies residues 1 to 24 (MNPKLCMLLLVCLMAFYVIETVQA).

This sequence belongs to the scoloptoxin-14 family. Post-translationally, contains 4 disulfide bonds. In terms of tissue distribution, expressed by the venom gland.

It localises to the secreted. The sequence is that of U-scoloptoxin(14)-Sm1a from Scolopendra morsitans (Tanzanian blue ringleg centipede).